The sequence spans 402 residues: Deoxyguanosinetriphosphate triphosphohydrolase-like protein (402 aa).

Residues 73 to 217 (RLTHTIEVAQ…AAIADDIAYN (145 aa)) form the HD domain.

This sequence belongs to the dGTPase family. Type 2 subfamily.

This chain is Deoxyguanosinetriphosphate triphosphohydrolase-like protein, found in Brucella suis (strain ATCC 23445 / NCTC 10510).